Reading from the N-terminus, the 461-residue chain is Cytochrome c biogenesis protein CcsB (461 aa).

3 helical membrane-spanning segments follow: residues 32–52 (LRLA…GTVI), 91–111 (TWWF…CTFT), and 178–198 (IGPI…IWGA).

Belongs to the Ccs1/CcsB family. As to quaternary structure, may interact with CcsA.

It localises to the cellular thylakoid membrane. In terms of biological role, required during biogenesis of c-type cytochromes (cytochrome c6 and cytochrome f) at the step of heme attachment. The chain is Cytochrome c biogenesis protein CcsB from Trichormus variabilis (strain ATCC 29413 / PCC 7937) (Anabaena variabilis).